The following is a 102-amino-acid chain: NADH-quinone oxidoreductase subunit K 1 (102 aa).

3 helical membrane-spanning segments follow: residues 3 to 23 (TLTT…LGIL), 29 to 49 (VGML…FMAF), and 62 to 82 (IIAL…LSII).

It belongs to the complex I subunit 4L family. NDH-1 is composed of 14 different subunits. Subunits NuoA, H, J, K, L, M, N constitute the membrane sector of the complex.

Its subcellular location is the cell inner membrane. It carries out the reaction a quinone + NADH + 5 H(+)(in) = a quinol + NAD(+) + 4 H(+)(out). Its function is as follows. NDH-1 shuttles electrons from NADH, via FMN and iron-sulfur (Fe-S) centers, to quinones in the respiratory chain. The immediate electron acceptor for the enzyme in this species is believed to be ubiquinone. Couples the redox reaction to proton translocation (for every two electrons transferred, four hydrogen ions are translocated across the cytoplasmic membrane), and thus conserves the redox energy in a proton gradient. This chain is NADH-quinone oxidoreductase subunit K 1, found in Syntrophobacter fumaroxidans (strain DSM 10017 / MPOB).